Here is a 1164-residue protein sequence, read N- to C-terminus: Receptor-like protein kinase BRI1-like 3 (1164 aa).

The first 23 residues, Met1 to Gly23, serve as a signal peptide directing secretion. The Extracellular portion of the chain corresponds to Arg24–Ser772. Asn32 carries an N-linked (GlcNAc...) asparagine glycan. Positions Cys65–Cys72 match the Cys pair 1 motif. LRR repeat units lie at residues Arg77–Thr98, Asn102–Gly123, Ser125–Phe146, Asn151–Ser173, Arg176–Ala197, Ser202–Leu224, Asn227–Ser248, Leu252–Gly274, Asn278–Leu300, Thr303–Cys325, Ser327–Val347, Arg352–Ser375, Asn376–Ser397, Val403–Lys424, Ser427–Thr448, Lys451–Asp473, Asn476–Cys498, Asn500–Glu523, Lys524–Cys546, and Asn548–Gln570. Residues Asn96 and Asn112 are each glycosylated (N-linked (GlcNAc...) asparagine). Asn156 carries an N-linked (GlcNAc...) asparagine glycan. N-linked (GlcNAc...) asparagine glycans are attached at residues Asn212, Asn227, and Asn257. Residues Asn362 and Asn373 are each glycosylated (N-linked (GlcNAc...) asparagine). N-linked (GlcNAc...) asparagine glycosylation occurs at Asn461. N-linked (GlcNAc...) asparagine glycans are attached at residues Asn532, Asn558, and Asn638. LRR repeat units lie at residues Ser640–Met662, Tyr664–Leu686, Ala688–Ser711, and Phe712–Thr734. N-linked (GlcNAc...) asparagine glycosylation is found at Asn722 and Asn743. The short motif at Cys748–Cys755 is the Cys pair 2 element. A helical transmembrane segment spans residues Ile773–Met793. Residues Ala794 to Pro1164 lie on the Cytoplasmic side of the membrane. 2 positions are modified to phosphothreonine: Thr847 and Thr855. In terms of domain architecture, Protein kinase spans Phe858–Val1136. ATP is bound by residues Ile864 to Val872 and Lys886. The residue at position 931 (Tyr931) is a Phosphotyrosine. The active-site Proton acceptor is the Asp985. Position 1020 is a phosphoserine (Ser1020). Residue Tyr1028 is modified to Phosphotyrosine.

It belongs to the protein kinase superfamily. Ser/Thr protein kinase family. Post-translationally, autophosphorylated on Tyr and Thr residues. In terms of tissue distribution, predominantly expressed in vascular tissues. Expressed only during postembryonic development with a very discrete pattern of expression, preferentially in the two protophloem cell files at the elongation zone of the root. The expression in these two cell files attenuates as the phloem cells differentiate in the upper root. In cotyledons and leaves, it is expressed in phloem cells, starting at the cotyledons and shoot apex, moving toward the basal part of the leaves, where the expression is weak. Expressed in the secondary and tertiary veins and in the upper part of the cotyledons and leaves. Weakly or not expressed in the inflorescence stems. Has some complementary expression with BRL1.

The protein resides in the cell membrane. It catalyses the reaction L-seryl-[protein] + ATP = O-phospho-L-seryl-[protein] + ADP + H(+). The enzyme catalyses L-threonyl-[protein] + ATP = O-phospho-L-threonyl-[protein] + ADP + H(+). The catalysed reaction is L-tyrosyl-[protein] + ATP = O-phospho-L-tyrosyl-[protein] + ADP + H(+). Its function is as follows. Receptor with a dual specificity kinase activity acting on both serine/threonine- and tyrosine-containing substrates. Binds brassinolide. Regulates, in response to brassinosteroid binding, a signaling cascade involved in plant development. May be involved in cell growth and vascular differentiation. The protein is Receptor-like protein kinase BRI1-like 3 (BRL3) of Arabidopsis thaliana (Mouse-ear cress).